A 115-amino-acid chain; its full sequence is Promotilin (115 aa).

Residues 1 to 25 form the signal peptide; that stretch reads MVSRKAVAALLVVHVAAMLASQTEA. The segment at 39–72 is disordered; it reads QEKERNKGQKKSLSVWQRSGEEGPVDPAEPIREE.

Belongs to the motilin family.

It localises to the secreted. Its function is as follows. Plays an important role in the regulation of interdigestive gastrointestinal motility and indirectly causes rhythmic contraction of duodenal and colonic smooth muscle. In Homo sapiens (Human), this protein is Promotilin (MLN).